A 427-amino-acid polypeptide reads, in one-letter code: Probable anaerobic glycerol-3-phosphate dehydrogenase subunit B (427 aa).

The protein belongs to the anaerobic G-3-P dehydrogenase subunit B family. The cofactor is FMN.

The enzyme catalyses a quinone + sn-glycerol 3-phosphate = dihydroxyacetone phosphate + a quinol. Its pathway is polyol metabolism; glycerol degradation via glycerol kinase pathway; glycerone phosphate from sn-glycerol 3-phosphate (anaerobic route): step 1/1. The chain is Probable anaerobic glycerol-3-phosphate dehydrogenase subunit B from Halobacterium salinarum (strain ATCC 29341 / DSM 671 / R1).